We begin with the raw amino-acid sequence, 722 residues long: MLQPSAQGSYSKAVLSTFRSLEDLTCDGSKIILDGQSLNVSSVVAAACHQVPASISKDPQLHARLRESVELLARKLAEGEIVYGVNTGFGGSADTRTDDYSTLQQALVQHQASGVLLPTDRSSSRPSSRYPHGLRSHSMPTAVVKAAMLVRCNSLLRGHSAVRPEVIEHILAFLRSGLIPVVPVRGSISASGDLSPLSYIANALEGNPDIAIQNEATGDVIRADEALQQLGLAPLRFGPKEGLGLLNGTAFSAGAASLVLFEANQLVLLSQVLTAMGTEALAGSTGNYHPFIAGVRPHRGQIEAAGNIFHFLRDSRMATSPGADGASHSSSLAQDRYALRTASQWIGPQIEDMSLASEQVHCELNSTTDNPLLDPGSGHMHHGGNFQATSITSAMEKTMSAMQMLGRMIFSQCTELINPALNNGLPPNLSFDDPSLSFTMKGIDINMSAYMAELSYLNHHVSNHVQSAEMHNQGLNSLALVASRYAAETVEVLSLMASAYLYALCQALDLRACHLEFLRNARSTVDSLTAELCLSFSPLLSESDQRQIQDSTWEQLLHHWNRSSTSDLHDRSRNAASHTMGALVELLPMQLNEATALPTRLAPQQQWLDEVSATLAGSYDATRAKFQSNPTTPFYLCSASRRMYEFVRKGLGVPLHRGIVDHPTYPSVTEEHAGQELIGSQVSKIYMALRGGVFRDVLQDCWYSSDSVRGFAGEELVLASKL.

The active-site Proton donor/acceptor is tyrosine 83. Residues 117–136 (LPTDRSSSRPSSRYPHGLRS) are disordered. The segment at residues 190 to 192 (ASG) is a cross-link (5-imidazolinone (Ala-Gly)). At serine 191 the chain carries 2,3-didehydroalanine (Ser). (E)-cinnamate contacts are provided by asparagine 247, glutamine 334, arginine 340, asparagine 370, lysine 441, glutamate 469, and asparagine 472.

Belongs to the PAL/histidase family. In terms of processing, contains an active site 4-methylidene-imidazol-5-one (MIO), which is formed autocatalytically by cyclization and dehydration of residues Ala-Ser-Gly.

The catalysed reaction is L-phenylalanine = (E)-cinnamate + NH4(+). The protein operates within alkaloid biosynthesis. Its function is as follows. Phenylalanine ammonia-lyase; part of the gene cluster that mediates the biosynthesis of the ergot alkaloids lentopeptins A and B. Within the pathway, lenB provides the cinnamic acid starter unit for the synthesis of the N-acyldiketopiperazine intermediate by the NRPS lenA. Cinnamic acid is condensed with the Ala-Val-Ala peptide chain by lenA which leads to the N-acyldiketopiperazine intermediate which in turn is converted into lentopeptins A and B by the cytochrome P450 monooxygenase lenC. The protein is Phenylalanine ammonia-lyase lenB of Aspergillus lentulus.